We begin with the raw amino-acid sequence, 160 residues long: Small ribosomal subunit protein uS9 (160 aa).

Belongs to the universal ribosomal protein uS9 family.

The polypeptide is Small ribosomal subunit protein uS9 (Mesorhizobium japonicum (strain LMG 29417 / CECT 9101 / MAFF 303099) (Mesorhizobium loti (strain MAFF 303099))).